The following is a 201-amino-acid chain: MSRYRGPRLKKIRRLGALPGLTRKTPKSGSNLKKKFNSGKKEQYRIRLQEKQKLRFHYGLTERQLLRYVHIAGKAKRSTGQVLLQLLEMRLDNILFRLGMASTIPGARQLVNHRHILVNGRIVNIPSFRCKPRDIITTKDNQRSKGLVQNYIASSDPGKLPSHLTIDTLEYKGLVNKILDRKWVGLKINELLVVEYYSRQT.

An S4 RNA-binding domain is found at 89–157 (MRLDNILFRL…VQNYIASSDP (69 aa)).

It belongs to the universal ribosomal protein uS4 family. As to quaternary structure, part of the 30S ribosomal subunit. Contacts protein S5. The interaction surface between S4 and S5 is involved in control of translational fidelity.

It localises to the plastid. Its subcellular location is the chloroplast. In terms of biological role, one of the primary rRNA binding proteins, it binds directly to 16S rRNA where it nucleates assembly of the body of the 30S subunit. With S5 and S12 plays an important role in translational accuracy. This Hordeum vulgare (Barley) protein is Small ribosomal subunit protein uS4c (rps4).